The sequence spans 766 residues: Cytoplasmic polyadenylation element-binding protein 3 (766 aa).

3 disordered regions span residues 1–35 (MSQEEVPGEIPGDIAIEKAENTVQDDVEAKNTSET), 131–179 (VPSR…ARRL), and 216–299 (PVPI…LPPR). 2 stretches are compositionally biased toward polar residues: residues 233-256 (ETPTDSPAKTETSSISKSYGSDYQ) and 276-289 (STPNRGQGLSNRDN). The RRM domain occupies 310-332 (IFVGGVPWDITEAALKDSFGEFG). Residues 578 to 602 (KAFSGPNRRSHLSSNSPSKPASLMS) form a disordered region. Over residues 589–602 (LSSNSPSKPASLMS) the composition is skewed to low complexity.

Its function is as follows. Cytoplasmic polyadenylation element binding protein that binds to and regulates the translation of specific mRNAs. The sequence is that of Cytoplasmic polyadenylation element-binding protein 3 (cpb-3) from Caenorhabditis remanei (Caenorhabditis vulgaris).